The primary structure comprises 637 residues: Sodium-dependent proline transporter (637 aa).

Residues 1–45 lie on the Cytoplasmic side of the membrane; that stretch reads MKKLQEAHLRKPVTPDLLMTPSDQGDVDLDVDFAADRGNWTGKLD. T20 bears the Phosphothreonine mark. At S22 the chain carries Phosphoserine. Helical transmembrane passes span 46–66, 74–93, and 117–137; these read FLLS…FPYR, AFLV…LFFL, and GAGA…NMII. Topologically, residues 138-214 are extracellular; the sequence is AYVLFYLFAS…QGIGRPGEIR (77 aa). N-linked (GlcNAc...) asparagine glycosylation occurs at N182. The next 9 helical transmembrane spans lie at 215–233, 242–259, 295–312, 324–345, 378–397, 425–443, 459–479, 500–519, and 538–556; these read WNLC…LCIL, VVYF…MLLV, IFYS…FASY, FIVT…FSVL, LPLS…TLGL, VFSG…ILTT, SFGL…VYGI, ACWL…YSIV, and LGIL…GMLV. The Cytoplasmic segment spans residues 557-637; sequence AVLREEGSLW…IAEEEEESMM (81 aa). 2 positions are modified to phosphoserine: S573 and S582. At T588 the chain carries Phosphothreonine. Position 591 is a phosphotyrosine (Y591). Phosphoserine is present on residues S598 and S600.

It belongs to the sodium:neurotransmitter symporter (SNF) (TC 2.A.22) family. SLC6A7 subfamily. As to expression, expressed in subpopulations of putative glutamatergic pathways of rat brain.

The protein localises to the synaptic cell membrane. It carries out the reaction L-proline(out) + chloride(out) + 2 Na(+)(out) = L-proline(in) + chloride(in) + 2 Na(+)(in). The enzyme catalyses L-pipecolate(out) + chloride(out) + 2 Na(+)(out) = L-pipecolate(in) + chloride(in) + 2 Na(+)(in). Its function is as follows. Brain specific sodium (and chloride)-dependent proline transporter. Terminates the action of proline by its high affinity sodium-dependent reuptake into presynaptic terminals. The sequence is that of Sodium-dependent proline transporter (Slc6a7) from Rattus norvegicus (Rat).